The following is a 313-amino-acid chain: MPFLELTLSCSEVTLPRFQNALDDVGAMAVTMLDANADTSNERALLEPGVGEMPLWDRLTMTALFDGGSDALVVLAALEAFDPGLDWSQVGFRMVEDSDWIRAWIDLFKSMQFGARTFIVPWNQDVPEAANAPDAAVVRLDPGLAFGSGTHQTTALCLRWLDSLAVSGELQGRSVLDFGCGSGILAIAALKLGASHAVGVDYDPQALLATADNAHRNALEAQLAVYMPQDEPVQTYQVVVANILASALSTLADTLAARVVPGGRIALSGILHGQEDELLERYAPWFEQLRCERDDEWMRIEGVRRAASGTQNG.

S-adenosyl-L-methionine-binding residues include T154, G179, D201, and N242.

It belongs to the methyltransferase superfamily. PrmA family.

The protein localises to the cytoplasm. The enzyme catalyses L-lysyl-[protein] + 3 S-adenosyl-L-methionine = N(6),N(6),N(6)-trimethyl-L-lysyl-[protein] + 3 S-adenosyl-L-homocysteine + 3 H(+). Its function is as follows. Methylates ribosomal protein L11. This is Ribosomal protein L11 methyltransferase from Xanthomonas oryzae pv. oryzae (strain MAFF 311018).